Here is a 177-residue protein sequence, read N- to C-terminus: Large ribosomal subunit protein uL6 (177 aa).

Belongs to the universal ribosomal protein uL6 family. As to quaternary structure, part of the 50S ribosomal subunit.

In terms of biological role, this protein binds to the 23S rRNA, and is important in its secondary structure. It is located near the subunit interface in the base of the L7/L12 stalk, and near the tRNA binding site of the peptidyltransferase center. In Nitrobacter winogradskyi (strain ATCC 25391 / DSM 10237 / CIP 104748 / NCIMB 11846 / Nb-255), this protein is Large ribosomal subunit protein uL6.